Here is a 154-residue protein sequence, read N- to C-terminus: Aspartate carbamoyltransferase regulatory chain (154 aa).

Zn(2+) is bound by residues Cys-109, Cys-114, Cys-138, and Cys-141.

It belongs to the PyrI family. In terms of assembly, contains catalytic and regulatory chains. Requires Zn(2+) as cofactor.

Its function is as follows. Involved in allosteric regulation of aspartate carbamoyltransferase. The sequence is that of Aspartate carbamoyltransferase regulatory chain from Aeromonas salmonicida (strain A449).